A 352-amino-acid polypeptide reads, in one-letter code: DNA ADP-ribosyl glycohydrolase (352 aa).

A Macro domain is found at 1–155 (MITYGSGDLL…IYPPSGGSRA (155 aa)). Residues 8-9 (DL), 20-22 (TVN), 31-34 (IALQ), and threonine 79 contribute to the ADP-D-ribose site. The Nucleophile role is filled by lysine 80. 117 to 121 (GVGNG) serves as a coordination point for ADP-D-ribose. The tract at residues 164–352 (MTWGRAVILE…VALDRILMTA (189 aa)) is interaction with DarT.

This sequence belongs to the DarG ADP-ribosyl glycohydrolase family. Interacts (via C-terminus) with cognate toxin DarT; this heterodimeric complex neutralizes the toxic effect of DarT by preventing ssDNA binding to DarT and consequently inactivating the toxin by direct protein-protein interactions.

The catalysed reaction is an N-(ADP-alpha-D-ribosyl)-thymidine in DNA + H2O = a thymidine in DNA + ADP-D-ribose. Its function is as follows. Antitoxin component of the hybrid type II/IV toxin-antitoxin (TA) system DarTG, which plays a crucial role in controlling bacterial growth and bacteriophage infection. De-ADP-ribosylates DNA (probably) modified on thymidine by its cognate toxin DarT, which neutralizes the activity of cognate toxin DarT. The chain is DNA ADP-ribosyl glycohydrolase from Mycobacterium bovis (strain BCG / Pasteur 1173P2).